A 108-amino-acid polypeptide reads, in one-letter code: MVKFCPKCNNLMLPKDGKLKCAVCGYEEETTAEGSKEYEYKEHLENKKEKITVIESEGLETLPTTRIECPKCGHNEAYWWLQQTRCADEPETRFYKCKKCGHTWREYD.

8 residues coordinate Zn(2+): Cys-5, Cys-8, Cys-21, Cys-24, Cys-69, Cys-72, Cys-97, and Cys-100. Residues 5–24 form a C4-type zinc finger; that stretch reads CPKCNNLMLPKDGKLKCAVC. The TFIIS-type zinc-finger motif lies at 65–105; sequence TRIECPKCGHNEAYWWLQQTRCADEPETRFYKCKKCGHTWR.

Belongs to the archaeal RpoM/eukaryotic RPA12/RPB9/RPC11 RNA polymerase family.

In terms of biological role, induces RNA cleavage activity in the RNA polymerase. In its presence, the cleavage activity of the RNA polymerase truncates the RNA back to position +15 in a stepwise manner by releasing mainly dinucleotides from the 3'-end of the nascent RNA. The truncated RNAs are able to continue elongation. Involved in transcriptional proofreading and fidelity. Misincorporation of nucleotides during elongation of transcription leads to arrested elongation complexes which are rescued by TFS-promoted removal of a dinucleotide from the 3'-end. TFS is able to induce a cleavage resynthesis cycle in stalled elongation complexes (resulting from the next missing nucleotide or a reduced incorporation rate of a wrong nucleotide) preventing misincorporation and enabling proofreading in a post-incorporation manner. Pausing of elongation complexes is the main determinant of TFS-induced RNA cleavage. The polypeptide is Transcription factor S (Methanocaldococcus jannaschii (strain ATCC 43067 / DSM 2661 / JAL-1 / JCM 10045 / NBRC 100440) (Methanococcus jannaschii)).